The primary structure comprises 161 residues: MTSIVEALVPGGKANPGPPLGPALGPLGVNIKEVVEKINEKTRDYNGMQVPVKVIVDDKKNVEIEVGTPPTASLVMKELGIQKGSGNAGSEVVGNLTIPQVAKIARMKKEDVLSYDLKATMKEVMGTCVPMGVNVEGMKAKDCQKALDEGKFDDLLANEAW.

This sequence belongs to the universal ribosomal protein uL11 family. Part of the ribosomal stalk of the 50S ribosomal subunit. Interacts with L10 and the large rRNA to form the base of the stalk. L10 forms an elongated spine to which L12 dimers bind in a sequential fashion forming a multimeric L10(L12)X complex.

Its function is as follows. Forms part of the ribosomal stalk which helps the ribosome interact with GTP-bound translation factors. The sequence is that of Large ribosomal subunit protein uL11 from Methanosarcina mazei (strain ATCC BAA-159 / DSM 3647 / Goe1 / Go1 / JCM 11833 / OCM 88) (Methanosarcina frisia).